The primary structure comprises 38 residues: Large ribosomal subunit protein bL36 (38 aa).

The protein belongs to the bacterial ribosomal protein bL36 family.

The protein is Large ribosomal subunit protein bL36 of Prochlorococcus marinus (strain SARG / CCMP1375 / SS120).